The following is a 267-amino-acid chain: 3-methyl-2-oxobutanoate hydroxymethyltransferase (267 aa).

Mg(2+)-binding residues include Asp-41 and Asp-80. 3-methyl-2-oxobutanoate-binding positions include 41–42, Asp-80, and Lys-109; that span reads DS. Position 111 (Glu-111) interacts with Mg(2+). The Proton acceptor role is filled by Glu-178.

The protein belongs to the PanB family. As to quaternary structure, homodecamer; pentamer of dimers. It depends on Mg(2+) as a cofactor.

The protein localises to the cytoplasm. The catalysed reaction is 3-methyl-2-oxobutanoate + (6R)-5,10-methylene-5,6,7,8-tetrahydrofolate + H2O = 2-dehydropantoate + (6S)-5,6,7,8-tetrahydrofolate. The protein operates within cofactor biosynthesis; (R)-pantothenate biosynthesis; (R)-pantoate from 3-methyl-2-oxobutanoate: step 1/2. Functionally, catalyzes the reversible reaction in which hydroxymethyl group from 5,10-methylenetetrahydrofolate is transferred onto alpha-ketoisovalerate to form ketopantoate. This Kosmotoga olearia (strain ATCC BAA-1733 / DSM 21960 / TBF 19.5.1) protein is 3-methyl-2-oxobutanoate hydroxymethyltransferase.